The primary structure comprises 70 residues: Large ribosomal subunit protein bL28 (70 aa).

The tract at residues 1 to 26 (MAKRCEVCGKAPRSGNTVSHSDKKSG) is disordered.

Belongs to the bacterial ribosomal protein bL28 family.

This chain is Large ribosomal subunit protein bL28 (rpmB), found in Thermotoga maritima (strain ATCC 43589 / DSM 3109 / JCM 10099 / NBRC 100826 / MSB8).